The primary structure comprises 245 residues: 1-(5-phosphoribosyl)-5-[(5-phosphoribosylamino)methylideneamino] imidazole-4-carboxamide isomerase (245 aa).

The active-site Proton acceptor is the D11. The Proton donor role is filled by D132.

This sequence belongs to the HisA/HisF family.

The protein resides in the cytoplasm. It carries out the reaction 1-(5-phospho-beta-D-ribosyl)-5-[(5-phospho-beta-D-ribosylamino)methylideneamino]imidazole-4-carboxamide = 5-[(5-phospho-1-deoxy-D-ribulos-1-ylimino)methylamino]-1-(5-phospho-beta-D-ribosyl)imidazole-4-carboxamide. It functions in the pathway amino-acid biosynthesis; L-histidine biosynthesis; L-histidine from 5-phospho-alpha-D-ribose 1-diphosphate: step 4/9. In Geobacillus kaustophilus (strain HTA426), this protein is 1-(5-phosphoribosyl)-5-[(5-phosphoribosylamino)methylideneamino] imidazole-4-carboxamide isomerase.